Reading from the N-terminus, the 164-residue chain is ATP synthase subunit b (164 aa).

A helical membrane pass occupies residues 10-30 (LLISQIVNFCLLAFLLNTFLY).

It belongs to the ATPase B chain family. As to quaternary structure, F-type ATPases have 2 components, F(1) - the catalytic core - and F(0) - the membrane proton channel. F(1) has five subunits: alpha(3), beta(3), gamma(1), delta(1), epsilon(1). F(0) has three main subunits: a(1), b(2) and c(10-14). The alpha and beta chains form an alternating ring which encloses part of the gamma chain. F(1) is attached to F(0) by a central stalk formed by the gamma and epsilon chains, while a peripheral stalk is formed by the delta and b chains.

It is found in the cell membrane. Functionally, f(1)F(0) ATP synthase produces ATP from ADP in the presence of a proton or sodium gradient. F-type ATPases consist of two structural domains, F(1) containing the extramembraneous catalytic core and F(0) containing the membrane proton channel, linked together by a central stalk and a peripheral stalk. During catalysis, ATP synthesis in the catalytic domain of F(1) is coupled via a rotary mechanism of the central stalk subunits to proton translocation. Component of the F(0) channel, it forms part of the peripheral stalk, linking F(1) to F(0). This Herpetosiphon aurantiacus (strain ATCC 23779 / DSM 785 / 114-95) protein is ATP synthase subunit b.